The chain runs to 258 residues: MTQIGQYIKLNDAVPNLILHITTKLLRNENLTSFKQEELLLIQHVCTSMLSHGIKILLLRESLYNSGIGDIVILNRKISNNYWFRIFSILKQHSDAELLRHMFNESHSAYISKKLHYSGNVSHMINFLFMDEFGVNLKIPEELICEGNIVFSVGAIYNHRLLKICRFFNRFWGDQEREPTVRLICKHLWFAYLIMFGKFEISTLAYSQQRAEHKAGLFSFLQNDFKVFCGMSENPQLLDSSAIFDLTGISAEDLFSYE.

It belongs to the herpesviridae UL79 family.

This is Protein U52 (U52) from Human herpesvirus 6A (strain Uganda-1102) (HHV-6 variant A).